Reading from the N-terminus, the 267-residue chain is 3-methyl-2-oxobutanoate hydroxymethyltransferase (267 aa).

The Mg(2+) site is built by D45 and D84. 3-methyl-2-oxobutanoate-binding positions include 45-46 (DS), D84, and K113. Position 115 (E115) interacts with Mg(2+). The active-site Proton acceptor is the E182.

The protein belongs to the PanB family. In terms of assembly, homodecamer; pentamer of dimers. Mg(2+) serves as cofactor.

The protein localises to the cytoplasm. The catalysed reaction is 3-methyl-2-oxobutanoate + (6R)-5,10-methylene-5,6,7,8-tetrahydrofolate + H2O = 2-dehydropantoate + (6S)-5,6,7,8-tetrahydrofolate. It functions in the pathway cofactor biosynthesis; coenzyme A biosynthesis. Functionally, catalyzes the reversible reaction in which hydroxymethyl group from 5,10-methylenetetrahydrofolate is transferred onto alpha-ketoisovalerate to form ketopantoate. This chain is 3-methyl-2-oxobutanoate hydroxymethyltransferase, found in Saccharolobus islandicus (strain Y.N.15.51 / Yellowstone #2) (Sulfolobus islandicus).